The sequence spans 337 residues: MKQSQPVLTIVVPCFNEEEVFQETSHQLTEVVDDLIEEKLIAEDSKILFVDDGSKDRTWALIAMESIRNKKVTGLKLACNVGHQKALLAGLHKAKNRSDCVISIDADLQDDISVIRDFMLKYHEGCEIVYGVRRSRKTDTFFKRTTALGFYRLMNKLGIKLIYNHADFRLMNKRSLEELERYPEANLFLRGIVPMIGFKSAEVLYDRKERFAGKTKYPLKKMLSFAFNGITSFSVAPIRFFTLLGFVLFFLSAVAGIGAFIQKLLGHTNAGWASLIISIWFLGGLQLMGIGIIGEYIGTIFSEVKRRPKYAIDIDLYNEQLSPLQRQEKERLEKKYS.

Helical transmembrane passes span 241–261 and 273–293; these read FTLL…GAFI and ASLI…IGII.

It belongs to the glycosyltransferase 2 family.

It localises to the cell membrane. This is an uncharacterized protein from Bacillus subtilis (strain 168).